Reading from the N-terminus, the 249-residue chain is Small ribosomal subunit protein eS6 (249 aa).

Residues 216–229 (RMKEAKEKRQEQIA) are compositionally biased toward basic and acidic residues. The tract at residues 216-249 (RMKEAKEKRQEQIAKRRRLSSLRASTSKSESSQK) is disordered. Phosphoserine is present on residues serine 235, serine 236, serine 240, serine 244, and serine 247. Residues 236–249 (SLRASTSKSESSQK) show a composition bias toward low complexity.

The protein belongs to the eukaryotic ribosomal protein eS6 family. In terms of assembly, component of the small ribosomal subunit. Part of the small subunit (SSU) processome, composed of more than 70 proteins and the RNA chaperone small nucleolar RNA (snoRNA) U3. In terms of processing, ribosomal protein S6 is the major substrate of protein kinases in eukaryote ribosomes. The phosphorylation is stimulated by growth factors, tumor promoting agents, and mitogens. It is dephosphorylated at growth arrest.

It localises to the cytoplasm. The protein localises to the nucleus. It is found in the nucleolus. Its function is as follows. Component of the 40S small ribosomal subunit. Plays an important role in controlling cell growth and proliferation through the selective translation of particular classes of mRNA. Part of the small subunit (SSU) processome, first precursor of the small eukaryotic ribosomal subunit. During the assembly of the SSU processome in the nucleolus, many ribosome biogenesis factors, an RNA chaperone and ribosomal proteins associate with the nascent pre-rRNA and work in concert to generate RNA folding, modifications, rearrangements and cleavage as well as targeted degradation of pre-ribosomal RNA by the RNA exosome. This Gallus gallus (Chicken) protein is Small ribosomal subunit protein eS6 (RPS6).